The chain runs to 90 residues: MSRTVNCRKFKQELEGLDFPPMPGAKGQDIFENVSKKAWQEWLSHQTMLINEKHLNMMDLTDRTYLNQQMDKFLSGEEYDQAEGYVAPEK.

Belongs to the Fe(2+)-trafficking protein family.

Its function is as follows. Could be a mediator in iron transactions between iron acquisition and iron-requiring processes, such as synthesis and/or repair of Fe-S clusters in biosynthetic enzymes. This chain is Probable Fe(2+)-trafficking protein, found in Saccharophagus degradans (strain 2-40 / ATCC 43961 / DSM 17024).